The following is a 466-amino-acid chain: Oryzain beta chain (466 aa).

Residues 1-21 (MAARAAAAAFLLLLIVGAATA) form the signal peptide. Residues 22–140 (APDMSIISYN…ERYRHDGVEE (119 aa)) constitute a propeptide, activation peptide. Disulfide bonds link C162–C205, C196–C238, and C296–C347. Residue C165 is part of the active site. Residues H302 and N322 contribute to the active site. A glycan (N-linked (GlcNAc...) asparagine) is linked at N341. The disordered stretch occupies residues 358–380 (KSGANPPKPSPTPPTPPTPPPPS). Positions 362 to 466 (NPPKPSPTPP…KRTLAKLNTA (105 aa)) are cleaved as a propeptide — removed in mature form. Positions 363–380 (PPKPSPTPPTPPTPPPPS) are enriched in pro residues. 2 disulfide bridges follow: C386-C398 and C392-C413. N-linked (GlcNAc...) asparagine glycosylation is present at N389.

This sequence belongs to the peptidase C1 family. Expressed only in seeds.

In terms of biological role, probable thiol protease. The polypeptide is Oryzain beta chain (Oryza sativa subsp. japonica (Rice)).